The primary structure comprises 226 residues: Glutathione peroxidase 3 (226 aa).

A signal peptide spans methionine 1–glycine 24. Selenocysteine 73 is a catalytic residue. Position 73 (selenocysteine 73) is a non-standard amino acid, selenocysteine.

It belongs to the glutathione peroxidase family. As to quaternary structure, homotetramer. Secreted in plasma.

The protein resides in the secreted. It carries out the reaction 2 glutathione + H2O2 = glutathione disulfide + 2 H2O. The catalysed reaction is tert-butyl hydroperoxide + 2 glutathione = tert-butanol + glutathione disulfide + H2O. Its function is as follows. Protects cells and enzymes from oxidative damage, by catalyzing the reduction of hydrogen peroxide, lipid peroxides and organic hydroperoxide, by glutathione. This Bos taurus (Bovine) protein is Glutathione peroxidase 3.